Reading from the N-terminus, the 773-residue chain is Beta-D-xylosidase 3 (773 aa).

Residues methionine 1–serine 23 form the signal peptide. A glycan (N-linked (GlcNAc...) asparagine) is linked at asparagine 131. The active site involves aspartate 298. Asparagine 349, asparagine 432, and asparagine 770 each carry an N-linked (GlcNAc...) asparagine glycan.

The protein belongs to the glycosyl hydrolase 3 family. As to expression, expressed in flowers and siliques, in the early stage of seed formation and not at seed maturation. Detected exclusively in the endosperm of very young seeds when the embryo is at the globular stage.

Its subcellular location is the secreted. It is found in the extracellular space. The protein resides in the extracellular matrix. The catalysed reaction is Hydrolysis of terminal non-reducing alpha-L-arabinofuranoside residues in alpha-L-arabinosides.. Functionally, involved in the hydrolysis of arabinan. Can hydrolyze (1,3)-alpha-, (1,2)-alpha-linked side group residues and non-reducing terminal L-arabinofuranose residues of debranched (1,5)-alpha-L-arabinan backbone. Also acts as a beta-D-xylosidase, releasing D-xylose from arabinoxylan and xylan. The polypeptide is Beta-D-xylosidase 3 (BXL3) (Arabidopsis thaliana (Mouse-ear cress)).